The sequence spans 246 residues: 23S rRNA (guanosine-2'-O-)-methyltransferase RlmB (246 aa).

Residues Gly196, Ile216, and Leu225 each coordinate S-adenosyl-L-methionine.

Belongs to the class IV-like SAM-binding methyltransferase superfamily. RNA methyltransferase TrmH family. RlmB subfamily. As to quaternary structure, homodimer.

The protein resides in the cytoplasm. The catalysed reaction is guanosine(2251) in 23S rRNA + S-adenosyl-L-methionine = 2'-O-methylguanosine(2251) in 23S rRNA + S-adenosyl-L-homocysteine + H(+). Its function is as follows. Specifically methylates the ribose of guanosine 2251 in 23S rRNA. The protein is 23S rRNA (guanosine-2'-O-)-methyltransferase RlmB of Yersinia pestis.